Here is a 182-residue protein sequence, read N- to C-terminus: ATP synthase subunit delta (182 aa).

Belongs to the ATPase delta chain family. In terms of assembly, F-type ATPases have 2 components, F(1) - the catalytic core - and F(0) - the membrane proton channel. F(1) has five subunits: alpha(3), beta(3), gamma(1), delta(1), epsilon(1). CF(0) has four main subunits: a(1), b(1), b'(1) and c(10-14). The alpha and beta chains form an alternating ring which encloses part of the gamma chain. F(1) is attached to F(0) by a central stalk formed by the gamma and epsilon chains, while a peripheral stalk is formed by the delta, b and b' chains.

Its subcellular location is the cellular thylakoid membrane. F(1)F(0) ATP synthase produces ATP from ADP in the presence of a proton or sodium gradient. F-type ATPases consist of two structural domains, F(1) containing the extramembraneous catalytic core and F(0) containing the membrane proton channel, linked together by a central stalk and a peripheral stalk. During catalysis, ATP synthesis in the catalytic domain of F(1) is coupled via a rotary mechanism of the central stalk subunits to proton translocation. Functionally, this protein is part of the stalk that links CF(0) to CF(1). It either transmits conformational changes from CF(0) to CF(1) or is implicated in proton conduction. The polypeptide is ATP synthase subunit delta (Synechococcus sp. (strain CC9605)).